The primary structure comprises 149 residues: Ribonuclease P protein component (149 aa).

A disordered region spans residues 123 to 149 (GTKVSRRSNGALHDAAPSSQPDPTVSG). Positions 139–149 (PSSQPDPTVSG) are enriched in polar residues.

Belongs to the RnpA family. Consists of a catalytic RNA component (M1 or rnpB) and a protein subunit.

The enzyme catalyses Endonucleolytic cleavage of RNA, removing 5'-extranucleotides from tRNA precursor.. Its function is as follows. RNaseP catalyzes the removal of the 5'-leader sequence from pre-tRNA to produce the mature 5'-terminus. It can also cleave other RNA substrates such as 4.5S RNA. The protein component plays an auxiliary but essential role in vivo by binding to the 5'-leader sequence and broadening the substrate specificity of the ribozyme. The polypeptide is Ribonuclease P protein component (Caulobacter vibrioides (strain ATCC 19089 / CIP 103742 / CB 15) (Caulobacter crescentus)).